Consider the following 99-residue polypeptide: UPF0235 protein Sbal223_1335 (99 aa).

Belongs to the UPF0235 family.

This is UPF0235 protein Sbal223_1335 from Shewanella baltica (strain OS223).